We begin with the raw amino-acid sequence, 342 residues long: Peptide chain release factor 1 (342 aa).

Glutamine 211 bears the N5-methylglutamine mark. The disordered stretch occupies residues 262-282 (KEREISQKRKSQIGTGERSEK).

The protein belongs to the prokaryotic/mitochondrial release factor family. Methylated by PrmC. Methylation increases the termination efficiency of RF1.

It localises to the cytoplasm. In terms of biological role, peptide chain release factor 1 directs the termination of translation in response to the peptide chain termination codons UAG and UAA. This Thermotoga maritima (strain ATCC 43589 / DSM 3109 / JCM 10099 / NBRC 100826 / MSB8) protein is Peptide chain release factor 1 (prfA).